The sequence spans 484 residues: Acetyl-coenzyme A carboxylase carboxyl transferase subunit beta, chloroplastic (484 aa).

The region spanning leucine 223–asparagine 484 is the CoA carboxyltransferase N-terminal domain. Zn(2+)-binding residues include cysteine 227, cysteine 230, cysteine 243, and cysteine 246. The C4-type zinc finger occupies cysteine 227–cysteine 246.

This sequence belongs to the AccD/PCCB family. In terms of assembly, acetyl-CoA carboxylase is a heterohexamer composed of biotin carboxyl carrier protein, biotin carboxylase and 2 subunits each of ACCase subunit alpha and ACCase plastid-coded subunit beta (accD). The cofactor is Zn(2+).

The protein localises to the plastid. It localises to the chloroplast stroma. It catalyses the reaction N(6)-carboxybiotinyl-L-lysyl-[protein] + acetyl-CoA = N(6)-biotinyl-L-lysyl-[protein] + malonyl-CoA. Its pathway is lipid metabolism; malonyl-CoA biosynthesis; malonyl-CoA from acetyl-CoA: step 1/1. Component of the acetyl coenzyme A carboxylase (ACC) complex. Biotin carboxylase (BC) catalyzes the carboxylation of biotin on its carrier protein (BCCP) and then the CO(2) group is transferred by the transcarboxylase to acetyl-CoA to form malonyl-CoA. In Capsella bursa-pastoris (Shepherd's purse), this protein is Acetyl-coenzyme A carboxylase carboxyl transferase subunit beta, chloroplastic.